The chain runs to 257 residues: NAD-capped RNA hydrolase NudC (257 aa).

Arg69 serves as a coordination point for substrate. Residues Cys98 and Cys101 each contribute to the Zn(2+) site. Glu111 provides a ligand contact to substrate. Residues Cys116 and Cys119 each contribute to the Zn(2+) site. Residue Tyr124 coordinates substrate. Residues 125-248 form the Nudix hydrolase domain; sequence PQIAPCIIVA…TVARRLIEDT (124 aa). The a divalent metal cation site is built by Ala158, Glu174, and Glu178. The Nudix box signature appears at 159–180; that stretch reads GFVEVGETLEQAVAREVMEESG. Residue 192–199 coordinates substrate; that stretch reads QPWPFPQS. Glu219 lines the a divalent metal cation pocket. Ala241 is a binding site for substrate.

It belongs to the Nudix hydrolase family. NudC subfamily. Homodimer. Mg(2+) is required as a cofactor. Mn(2+) serves as cofactor. The cofactor is Zn(2+).

It carries out the reaction a 5'-end NAD(+)-phospho-ribonucleoside in mRNA + H2O = a 5'-end phospho-adenosine-phospho-ribonucleoside in mRNA + beta-nicotinamide D-ribonucleotide + 2 H(+). The catalysed reaction is NAD(+) + H2O = beta-nicotinamide D-ribonucleotide + AMP + 2 H(+). The enzyme catalyses NADH + H2O = reduced beta-nicotinamide D-ribonucleotide + AMP + 2 H(+). MRNA decapping enzyme that specifically removes the nicotinamide adenine dinucleotide (NAD) cap from a subset of mRNAs by hydrolyzing the diphosphate linkage to produce nicotinamide mononucleotide (NMN) and 5' monophosphate mRNA. The NAD-cap is present at the 5'-end of some mRNAs and stabilizes RNA against 5'-processing. Has preference for mRNAs with a 5'-end purine. Catalyzes the hydrolysis of a broad range of dinucleotide pyrophosphates. This chain is NAD-capped RNA hydrolase NudC, found in Salmonella dublin (strain CT_02021853).